Here is a 245-residue protein sequence, read N- to C-terminus: 4-hydroxy-tetrahydrodipicolinate reductase (245 aa).

Residues 7–12, 75–77, and 102–105 each bind NAD(+); these read GAKGKV, GTT, and APNF. The active-site Proton donor/acceptor is His132. A (S)-2,3,4,5-tetrahydrodipicolinate-binding site is contributed by His133. The active-site Proton donor is Lys136. A (S)-2,3,4,5-tetrahydrodipicolinate-binding site is contributed by 142-143; it reads GT.

The protein belongs to the DapB family.

It localises to the cytoplasm. It catalyses the reaction (S)-2,3,4,5-tetrahydrodipicolinate + NAD(+) + H2O = (2S,4S)-4-hydroxy-2,3,4,5-tetrahydrodipicolinate + NADH + H(+). The catalysed reaction is (S)-2,3,4,5-tetrahydrodipicolinate + NADP(+) + H2O = (2S,4S)-4-hydroxy-2,3,4,5-tetrahydrodipicolinate + NADPH + H(+). It participates in amino-acid biosynthesis; L-lysine biosynthesis via DAP pathway; (S)-tetrahydrodipicolinate from L-aspartate: step 4/4. Its function is as follows. Catalyzes the conversion of 4-hydroxy-tetrahydrodipicolinate (HTPA) to tetrahydrodipicolinate. The sequence is that of 4-hydroxy-tetrahydrodipicolinate reductase from Mycobacterium bovis (strain BCG / Pasteur 1173P2).